The sequence spans 247 residues: 3-deoxy-manno-octulosonate cytidylyltransferase (247 aa).

It belongs to the KdsB family.

The protein localises to the cytoplasm. It catalyses the reaction 3-deoxy-alpha-D-manno-oct-2-ulosonate + CTP = CMP-3-deoxy-beta-D-manno-octulosonate + diphosphate. It participates in nucleotide-sugar biosynthesis; CMP-3-deoxy-D-manno-octulosonate biosynthesis; CMP-3-deoxy-D-manno-octulosonate from 3-deoxy-D-manno-octulosonate and CTP: step 1/1. The protein operates within bacterial outer membrane biogenesis; lipopolysaccharide biosynthesis. Activates KDO (a required 8-carbon sugar) for incorporation into bacterial lipopolysaccharide in Gram-negative bacteria. The polypeptide is 3-deoxy-manno-octulosonate cytidylyltransferase (Methylobacterium radiotolerans (strain ATCC 27329 / DSM 1819 / JCM 2831 / NBRC 15690 / NCIMB 10815 / 0-1)).